The primary structure comprises 459 residues: Cysteine--tRNA ligase (459 aa).

Cys31 contacts Zn(2+). The 'HIGH' region motif lies at 33–43 (PTVYYNPHIGN). Zn(2+) contacts are provided by Cys216, His241, and Glu245. A 'KMSKS' region motif is present at residues 274 to 278 (KMSKS). Lys277 is an ATP binding site.

This sequence belongs to the class-I aminoacyl-tRNA synthetase family. In terms of assembly, monomer. Zn(2+) is required as a cofactor.

Its subcellular location is the cytoplasm. The catalysed reaction is tRNA(Cys) + L-cysteine + ATP = L-cysteinyl-tRNA(Cys) + AMP + diphosphate. The protein is Cysteine--tRNA ligase of Rickettsia rickettsii (strain Iowa).